The following is a 173-amino-acid chain: Endoribonuclease YbeY (173 aa).

Zn(2+)-binding residues include H126, H130, and H136.

It belongs to the endoribonuclease YbeY family. The cofactor is Zn(2+).

It localises to the cytoplasm. Single strand-specific metallo-endoribonuclease involved in late-stage 70S ribosome quality control and in maturation of the 3' terminus of the 16S rRNA. This Sinorhizobium fredii (strain NBRC 101917 / NGR234) protein is Endoribonuclease YbeY.